Here is a 572-residue protein sequence, read N- to C-terminus: Proline dehydrogenase 1, mitochondrial (572 aa).

The span at 105–124 (NHSNQTNNVNNKNYNNNNNN) shows a compositional bias: low complexity. Residues 105–140 (NHSNQTNNVNNKNYNNNNNNFEKDDKFGPPNNQNNN) form a disordered region.

Belongs to the proline oxidase family. Requires FAD as cofactor.

It is found in the mitochondrion matrix. The enzyme catalyses L-proline + a quinone = (S)-1-pyrroline-5-carboxylate + a quinol + H(+). It functions in the pathway amino-acid degradation; L-proline degradation into L-glutamate; L-glutamate from L-proline: step 1/2. In terms of biological role, converts proline to delta-1-pyrroline-5-carboxylate. The sequence is that of Proline dehydrogenase 1, mitochondrial (prodh) from Dictyostelium discoideum (Social amoeba).